The following is a 122-amino-acid chain: Large ribosomal subunit protein uL18 (122 aa).

Residues 1–25 (MSTLSRKQQTQKRHRRLRRHLSGTA) are disordered. Positions 9 to 21 (QTQKRHRRLRRHL) are enriched in basic residues.

It belongs to the universal ribosomal protein uL18 family. In terms of assembly, part of the 50S ribosomal subunit; part of the 5S rRNA/L5/L18/L25 subcomplex. Contacts the 5S and 23S rRNAs.

In terms of biological role, this is one of the proteins that bind and probably mediate the attachment of the 5S RNA into the large ribosomal subunit, where it forms part of the central protuberance. This Synechococcus sp. (strain CC9311) protein is Large ribosomal subunit protein uL18.